A 1401-amino-acid chain; its full sequence is DNA-directed RNA polymerase subunit beta' (1401 aa).

The Zn(2+) site is built by Cys-70, Cys-72, Cys-85, and Cys-88. The Mg(2+) site is built by Asp-460, Asp-462, and Asp-464. Zn(2+) is bound by residues Cys-808, Cys-882, Cys-889, and Cys-892.

It belongs to the RNA polymerase beta' chain family. The RNAP catalytic core consists of 2 alpha, 1 beta, 1 beta' and 1 omega subunit. When a sigma factor is associated with the core the holoenzyme is formed, which can initiate transcription. It depends on Mg(2+) as a cofactor. Zn(2+) serves as cofactor.

The enzyme catalyses RNA(n) + a ribonucleoside 5'-triphosphate = RNA(n+1) + diphosphate. In terms of biological role, DNA-dependent RNA polymerase catalyzes the transcription of DNA into RNA using the four ribonucleoside triphosphates as substrates. This chain is DNA-directed RNA polymerase subunit beta', found in Legionella pneumophila (strain Corby).